We begin with the raw amino-acid sequence, 1185 residues long: Calmodulin-binding transcription activator homolog 1 (1185 aa).

Residues 72–200 (AVELFPCFKD…YLNVKTNNKI (129 aa)) constitute a DNA-binding region (CG-1). Disordered regions lie at residues 252–277 (GVNL…RRNS) and 390–411 (KIRS…VTST). Over residues 393–411 (SGSQESPMGPPSSSSVTST) the composition is skewed to low complexity. The region spanning 418–498 (EMTPSSSSLK…ISTASEFTYE (81 aa)) is the IPT/TIG domain. An ANK repeat occupies 616–646 (DGSTPLHTACKNSASRIARLIISIDSSAIDV). One can recognise an IQ domain in the interval 957-984 (EAAMVIQRAYRVYRARSTTRRQEDIERR). The tract at residues 1121-1185 (CPQTSGDQRN…KPPYGCGTLA (65 aa)) is disordered. Residues 1128–1147 (QRNKRDSDGERKRDAHHDAP) show a composition bias toward basic and acidic residues.

This sequence belongs to the CAMTA family. May interact with calmodulin. In terms of tissue distribution, expressed broadly in the nervous system.

The protein localises to the nucleus. Functionally, transcription factor. Positively modulates neuronal levels of the ubiquitous Ca2+ sensor calmodulin/cmd-1, probably by direct binding to the cmd-1 promoter, thereby regulating Ca2+ signaling, physiology, and behavior. The polypeptide is Calmodulin-binding transcription activator homolog 1 (Caenorhabditis elegans).